A 218-amino-acid chain; its full sequence is Octanoyltransferase (218 aa).

In terms of domain architecture, BPL/LPL catalytic spans 30–212 (ENTADEIWLV…HFYNILGYNA (183 aa)). Substrate contacts are provided by residues 69–76 (RGGQITYH), 141–143 (SLG), and 154–156 (GLA). The active-site Acyl-thioester intermediate is the Cys172.

This sequence belongs to the LipB family.

Its subcellular location is the cytoplasm. The enzyme catalyses octanoyl-[ACP] + L-lysyl-[protein] = N(6)-octanoyl-L-lysyl-[protein] + holo-[ACP] + H(+). The protein operates within protein modification; protein lipoylation via endogenous pathway; protein N(6)-(lipoyl)lysine from octanoyl-[acyl-carrier-protein]: step 1/2. In terms of biological role, catalyzes the transfer of endogenously produced octanoic acid from octanoyl-acyl-carrier-protein onto the lipoyl domains of lipoate-dependent enzymes. Lipoyl-ACP can also act as a substrate although octanoyl-ACP is likely to be the physiological substrate. This is Octanoyltransferase from Actinobacillus pleuropneumoniae serotype 5b (strain L20).